Reading from the N-terminus, the 407-residue chain is Argininosuccinate synthase (407 aa).

ATP is bound by residues 16-24 (AYSGGLDTS) and alanine 44. L-citrulline-binding residues include tyrosine 96 and serine 101. Glycine 126 contributes to the ATP binding site. Residues threonine 128, asparagine 132, and aspartate 133 each contribute to the L-aspartate site. Asparagine 132 provides a ligand contact to L-citrulline. L-citrulline is bound by residues arginine 136, serine 185, serine 194, glutamate 270, and tyrosine 282.

This sequence belongs to the argininosuccinate synthase family. Type 1 subfamily. As to quaternary structure, homotetramer.

Its subcellular location is the cytoplasm. It carries out the reaction L-citrulline + L-aspartate + ATP = 2-(N(omega)-L-arginino)succinate + AMP + diphosphate + H(+). It participates in amino-acid biosynthesis; L-arginine biosynthesis; L-arginine from L-ornithine and carbamoyl phosphate: step 2/3. This is Argininosuccinate synthase from Shewanella amazonensis (strain ATCC BAA-1098 / SB2B).